Here is a 338-residue protein sequence, read N- to C-terminus: DNA-directed RNA polymerase subunit alpha (338 aa).

The segment at 1 to 225 (MLISQRPTLT…ELFGLARELN (225 aa)) is alpha N-terminal domain (alpha-NTD). An alpha C-terminal domain (alpha-CTD) region spans residues 242-338 (YIAAYSMPIE…YIDVEPEDAE (97 aa)). Residues 314–338 (FDPSTLEGYDAETGGYIDVEPEDAE) are disordered.

The protein belongs to the RNA polymerase alpha chain family. Homodimer. The RNAP catalytic core consists of 2 alpha, 1 beta, 1 beta' and 1 omega subunit. When a sigma factor is associated with the core the holoenzyme is formed, which can initiate transcription.

It carries out the reaction RNA(n) + a ribonucleoside 5'-triphosphate = RNA(n+1) + diphosphate. DNA-dependent RNA polymerase catalyzes the transcription of DNA into RNA using the four ribonucleoside triphosphates as substrates. The protein is DNA-directed RNA polymerase subunit alpha of Corynebacterium efficiens (strain DSM 44549 / YS-314 / AJ 12310 / JCM 11189 / NBRC 100395).